The chain runs to 554 residues: Dihydroxy-acid dehydratase (554 aa).

Residue aspartate 78 participates in Mg(2+) binding. Cysteine 119 is a [2Fe-2S] cluster binding site. The Mg(2+) site is built by aspartate 120 and lysine 121. An N6-carboxylysine modification is found at lysine 121. Residue cysteine 191 participates in [2Fe-2S] cluster binding. Residue glutamate 442 participates in Mg(2+) binding. Serine 468 functions as the Proton acceptor in the catalytic mechanism.

It belongs to the IlvD/Edd family. In terms of assembly, homodimer. Requires [2Fe-2S] cluster as cofactor. Mg(2+) is required as a cofactor.

It carries out the reaction (2R)-2,3-dihydroxy-3-methylbutanoate = 3-methyl-2-oxobutanoate + H2O. The catalysed reaction is (2R,3R)-2,3-dihydroxy-3-methylpentanoate = (S)-3-methyl-2-oxopentanoate + H2O. It functions in the pathway amino-acid biosynthesis; L-isoleucine biosynthesis; L-isoleucine from 2-oxobutanoate: step 3/4. The protein operates within amino-acid biosynthesis; L-valine biosynthesis; L-valine from pyruvate: step 3/4. Functionally, functions in the biosynthesis of branched-chain amino acids. Catalyzes the dehydration of (2R,3R)-2,3-dihydroxy-3-methylpentanoate (2,3-dihydroxy-3-methylvalerate) into 2-oxo-3-methylpentanoate (2-oxo-3-methylvalerate) and of (2R)-2,3-dihydroxy-3-methylbutanoate (2,3-dihydroxyisovalerate) into 2-oxo-3-methylbutanoate (2-oxoisovalerate), the penultimate precursor to L-isoleucine and L-valine, respectively. This is Dihydroxy-acid dehydratase from Acetivibrio thermocellus (strain ATCC 27405 / DSM 1237 / JCM 9322 / NBRC 103400 / NCIMB 10682 / NRRL B-4536 / VPI 7372) (Clostridium thermocellum).